The following is a 6668-amino-acid chain: MVTQFHPVRPPVRATVTAVSSPAFSPPSSIPSDGLPGRLSVPETSRPFDPSVSDFALSGRSQAAVDADSGVPERHPDAARMAYRAEQSTGDYGSSSAYALARERRRQLRGRSRPASGEGRGTILRNALPRASSCTPPVLSSGSVPQSAQQRPAASLVSWKAGRFSGNVSRRCVACSAGDQDRVASDSRGDAALHSAALHRPASVSPQRTRAATGAKAVAFPLDAPDAGGPGLCTPQTGSGLEVSGHGKRRLSFQQDFTCGIERTLLPHLALPSVDVSSRGFPGRETTVWQDQAVGGRSDEAEEMDLNSGAGVTDRFYVSPQKWRCSQAAARTASAPRSVTTAGRGTSLASSVSESQSQLLPASPGASSVAACTPEEDALRALQREQQQDLFAALLRSRQARLATTPGASDVWTEERNLQRGEKEGALRPPHPSSAADSGVSTGDRLEGGFPKTDAPRTAQTPGRAFFDVAAEQVVFYQRQAELFRAKYEDAERRCAERDAAVHERDVKIQFLQAQIAALTHQVQTLQHPERGNVTDRAEEKALPQLVDPPAEETEEAVVVSKAFHEAQLARAREETKTLRQKIAALQQDIRPAVVSPSQPSTRPSSETAVTRGDRETANDKRHDTRSEDERTRELTERLQAALAVNESLREELLEARQQLSLLRASSGTPSAFPVAESPQTGALKASFSSSPALSGPGAAGAFSAPDAPKLEVSFLPNVSRASDSSRRATSLSNLPSVEGCRSREKSPEDLLLSSSSGGFSRPHNLALRRELAVRRRLNAQRKQRCLELEQQVHVLASSLEVAREQARAAESVGLSLSQQLQTQTEEARCLQRRTAEAGKLLRVVQERLETGERFVAVLREQREEYKALHEHHTECLEENRRLRASIERLETERMSLLERTEKSRVEFLALVAEKGRSDKQARDALQRLAEAESQQERSTQALKLHAQDLEERLAKKEEQVRSLRGELEAAIVRAEAAEREFSRLRSSLSLASGPADFAAGFPAFSSEEASTVAASEEHSKHAKEAQLQLVLLLAECAEESLRMSAQREKQLSREVTELERQLDRALQTMDEASEQAEALLADHEAAGAVYIQPAYTAGETLFWTSQQLLDVLQNRANWADLARGLEQRELELEARLLFAHQQNDGLHDEARRLETRLQKSEQRTLWIASQFLALMDRGNSEAEDSCESKEEDAQFAQQMSSVRESEARRQRSLLEEEKMETERAALLQRLARESSRASATEQANWHLESRVEDLRVALAEITAERDSVSAELAEEKATARDLAERLQVSEAALERLKKREREAVSRDFFCGSEADSHAVGAAEGSGRSPTHLESLVQQRDELQEMCQELAQRLEAMTRGMTRQQEERAANEERVERETRELHARWKRAASDCESLAQQKAELETQLQDLSENCAAAEVAYRDLEKKWMEEREAHNRLDDEDRRSGREVRLSRRERRLARRRRGGVSDEEARPRDGASSLQSSLSSLSPFEEDGSELARRRPAAEEAVERETNLKKELEAAHQQKNEAEEMCKELGTQLAVLTTLLEAATKEKEDLVAAANRGHKGPVSEQESPSEEKSDLRRDNGDSELVESREALLEKLHAREEELGEARRALLLEKETKAQLEEQLAVETRKREMQHQASEEAKEREEREREEKARQAADLAADLARANSELTSMREKLAASEVARAALEKAEVAREETTKLSLQQQSEKEEMRQMAAAEVADLRNTLASTQEELATLRGRLQEWEATATTPGRLAEELQELRRVVDFQEVEKQQLLESLREWEEKEEEHQAAMKEFEGSYVALQREAFDARAQLQRMIRVVEEHKRRRLRALQEKKRGAGGASQQEEKSAGEGASEETGSDFGEAGEASAEATPRGLEAAVSEVELQAAEDHDILVGRVEELERMQTELEEQRRMLTKHLQQTTEKLQEQCQTTSELQTRCVQLADALEKARAYGATEKHGETPGACESGEETLRQRLASAEEELDRLRREKEELASREETARGQEQAFEVELAKARREAEDKAEIHISEIQQFYEALQAKMERAHAEAENALTTEVQALRSEVQRLKALAAAQTEPTLDQRQDEFEREREKELEREKELERVVAELEREREEKARREAAHEREVAKTRQEAEAAAEMRVSEIQDFFQKLQDHMTQSHAQAKSELLARVAVLEKEVADLREQTPKEQRESGTFQLEVKEIGRKEDEMEDAEVERMGAKQSGDKQTAYYEFERSVGEAEPASRAHEESPEAEGRLERSAEAFEDAAASPQESPFYACSPCSSFSSVREFPEELAAEDENGLAETLRREVEQLHAQCRTLRERVAALEKAAEDKGNLLAKTEDEKRDVEEQLRQTVARVKDQADRLARMSQQCSMRGQELQDLQRREVQLRRQVEEQEEKQREQNARMLQQNEERHEALLAKHSAEQRLTLQREQLAGEERRRQAAEAHAEELLERLETVQKKLLESENEKAQVSLSEARLREELDRVQMAHERERERERQAERAREEKQQRRVEGLQRAKRETDDRLAELLGRAEEQEDRVRTLERQEALLRREVAEQKTQLSLREKELEEQKASREDAKKEFAAALARQETRHEQFLHARLEEERARAEEDVMTLRGLLNEQRDAQKQMETNFRRQLERQVQAARQLDASLQECEDEEEKRVEKFNATTRELQAVVERYNATLEELTAVSEERDNLRLKLAELQSEVSEIRREARDLQAAHLEKEERDRRQWEAAENLQSELEKEVRRLTEERSHALERERREREELERMHREADAARAEEARERLREREEWEARCREKEEMAAEKASLLESCEKRLGQLQEETRRREEAAQRREDEREKEREKRLRDYEGEVHELHLKLHQRRIQEEEKLHEIREKQRDLEHELFSTQQKLQVAQRHREEAEAAAAAAERARTLCEGLLAEERGAAKKAREEQNALAEQVKRLDRENEEKSRKLQDQQLKFSQHLAVAAEESEAKEAEKQREAATINALRDEVQSMQEQLNKEKGEVSSLRRELVNAKAAHADAVERQGEAEKTRDENQQQVSRLKTTLEEVERRLQSIKTQLTETQEKLEGERERVRAAEDRQIQLERYIKELEAQERDAREAGAAATRAKEQALQEERDRSDDDRMRLLAELRRCEEEKRRVEDELQARKAEQEAERERLEVELQRREEEILGLQEECDRRREETIGEMAANREEQEALRGELKHLKDRVDHGEAKAAALTQHLEAAESEKRHVQRELESRGEELEQLRIAKSRVETDFSRLKMEVEAERERNQSQRTFWEQVVDGSHKRQQELQELLDQREAKSEAAETAWRAKTESLQATVATLEEKLKEKERHLSSLEKELADTRESLGRSCSAVTAELHAKERSYEAQVAQLQEESRSIKRALESALADCRRQAEAHEQMLRETLGETQNQAQSLQRQLELSRAELTGRERAWQSAEQQSREETTVLRNRCGALEAELRVQETRAQGLEQENRQLHAREEATRQELEGVLQREAEMQRRFQQTWTEAHMSTEELLVQLQREEQKNRLELRMAEQRMQELQQIREREVTEWARERSRLQADCEKRQRDAADASKQLAEAQLAAALAKEELCRVQDELTVLRVKDEALQRQFLSLAASSSGVLGSTGVSLSGGREKGRNNLSHDEAHAAERAETSLASVRTLTEQRCQALEAALKTASESRDRNAQHCASLRRELAELTRDVQREKEEGEMKTSELEKAHRRIEKLLAVQEETRAQAAELHRRCREYQVKVEEMLREREREERRRDDPGDEERRSRSVARASAEGRNDATEEAGNRGERSSRVPQTRFQNEGFAASERAAHAEETDSLQGSRASLLARQSLAFQKQTEMLQAVIEELGRKLQNQQEQQLLLLTHGHRSAEAAREEREREERERERRVRLLEQRCQDGEIEREALKAELQRAELGSSEAQKQKEDVEREVRRLQILSENLQRRLSKVEAERDSQESAERRSEREQTQREQELLEALQERDIQQRVQESYLERIRGAVEELKAALKQTRREKDASEHRVLLLRRQIEETTALQRERDGAFALLQREVDEAREGREKLEAEVESEKAKRQKVELQKDDLEKTFELDRAALDEECRALQSSLETLRGRLQVQEETKRLVEAEAQRWASQCRETQAALGEEREKGELQEKERGEERRKLLGQLEDEREARARLEQRCADLEKERQREQEERARETERQQEEIERFKARLAESRTAWEDRCRDLNDDLIQVRRQWRETQADLEKALRGQEEETRQREEAERERDAETRRAAEAIAAVARLQAERRTEQATDAAERQQKATLSGKQGEEREARQEEQALKRHELAVSGTREGEELERLKKTLQAVIDNRDRLQSEWLHLRQESEASRSDLTAARNRCLQLEEQVRSVTQELRDCQRALRAADSEKTTQTEKLDRLHMSLERERRAREETLDRLVGLEREVSRMQREKEESMHRLHTAERERESLALSLTALRERERQSRRASGDEAEMERGWQAEKAESLVYLETLEKQLKATEASLARIREDRDRMQRALVDAEERLAEELERTRRRERGEDPRVSDSSPSEAVTTLAAEVDHTQRMLEQARERTAALEKELAASYRQRETDSERVALLRAQLEAQRRSVEDADAAKEKLSSRLEECMRQEAFATAALEAERKLNSRLKEQCLQMETELAETGRRRLRAEADATQGEARLRDVESLLHTAREQLQARTEQEDRLREELERQEEEMAALKATRDEQQLVVERLERQLQTEQQLREREQQLQEREKKLRERESAEVSETDRLVREIQHEAEREKRELMKALEERDDRLRHLEAEVQATRRDLAETRERGKQERSVEEEKLRKRLSYLKEVQERTAQENDEKSRRLRQFEQADATLRSELQEREERLVALERARAALEAKLAETEEVVVSLRREVASSRKKLENERERSGVLRYEEEALRTQIKETEKVQRENEALKESLQTQRAQLHALEKRTRQRDQENQSLETKVASLQKEVRRLNEAYAAQVEKLKKDAERLYSELEQSETQRVSAQDASVELEAQLAAGATRWRASEARLEKAERALEDFRRRQQQGRSHLTRTQAILEGLLTVPLLPPTSPSSSSSSALANEDKKPREVVSPSASREEALLTLAEKLREERRDAVASIREREGARRRSLASLGQELEEERWQVKQLQELLKEVDSARKEALEQETLQTREIDKLRSALAKAAVASEERERTLLRLEEKLAEERRGRQALAEELQRQRSSSSAVSRDGGREETSENCFEKTSASDREAARLRADEGLARDQTLREKEADCAELQQHLERLRGKVAELREGKRALERQVGRLDSKLHAAQEEKTQLTEALEAAAKEKRDLERKAAGSATHARDLQTECLALQRQLEEVAERQALARSQSQGADEERQRLEETVAETVGRAKRAEEAVEELTGEIQGLRRERQRLQEALGRKERTEKKLENAVQALEERLSRMHRQSASEGYEGGEGGRGEGSEPAALPTLEARLQRATEESERQARAQRALEEELFESKKLHAEERERLVQENLELNERVAYLQSRCRHLEADLDALRRTAENVQARLADRAEAETVGETKPEERVDLRKELEAANRARERLEREERRLQAHLEDSQKALAVQKRRQEDQEEMVAGLKSRVEEVQKTLRKREEELAVALARLTGKESELECAANEVKDLQKAAESVQSRLSSLEETKRQLEEKNNLLQAQVDRQHRVLSGLRGNVEASVEHNGETGEGEHASTARQERRAREELENDLRRLDEVCEQLQREKSQQESVAKAKTRELDALQRSFKLEVCALQEDAAKLQAMRAGLESQCEEAQQTVREMEERVRELTRENHLLQRALERAEEECSQWKARMRASRSDVSETRETSDEGQEGPDLARRQCTRARRDGEAADAPGEVQREEDTGRTQALRQWIDRLEEKLQKAEREEQGLKRELNGATRRAEELQRALEQGVEKFDELVARNEELKRKWAEDRCSWAAQRKREVEEHNKEATQLREECMALEKENRVFQQELDRQAGDLKTLHEKALRLADRNAHLQAELAKQQDAASAVAPLEKEISALQEEMEMREAAARDTEADLEAYRLKNRELEAEVASLWRQIAEERGERELVESDNVMLASHQNRDQKLRYTEVLKKQLDSERSARLRLQRDANRLRVETFSLRPLLRLLAGETVGDILVKDFGRGGGSEKKDSLQASRGVAGTSLAASILDASQNSAAAVLSASRRILRCSRPGLRHSRSVSIGRRGGAVLPARSLSLSARSEKPTVALAVRDRVGDAFPVYRQLRVLHRSLSFVMNEFISFLALLQDVLKDEDLLDRLLGVLPAASTFVVSALPPSQGRQDLPPQLSHADAEDLPGLSLSQLDEGRPTETLEARRHQFFSLVSALKQQLRVKLVAHPAASVPSVSVSPSAHGLAASSSPYSPIPGGKRGDGSQGEASRRQRQLSLLAEPRGLAGDSTHRGELPLATLEEDVQGEASGAPSGSLSLDPLAGSSLVVSAREQRDENVSTLSRFSRSRRPEEQGESRRGDAGVSRAGLRSAVSRYEETSREWNPRSSFSLSPSASPGNSNRRLDGSLSEEEQRTEERSSGPGRPAFLQPKGSGAGTAGSGVEERKGEERRSLEESRNTIASSLFSSFASVSSFFESRTGDN.

20 coiled-coil regions span residues lysine 562–aspartate 589, threonine 632–serine 666, histidine 873–serine 988, leucine 1042–alanine 1087, valine 1252–arginine 1307, leucine 1333–lysine 1427, arginine 1501–glutamine 1538, arginine 1594–alanine 1688, histidine 1896–lysine 1930, glutamate 1975–serine 2224, alanine 2298–glutamate 3272, glutamine 3298–glutamate 3436, leucine 3526–glutamate 3599, cysteine 3697–arginine 3773, threonine 3856–glutamate 4137, arginine 4170–arginine 4486, leucine 4515–arginine 5078, leucine 5165–leucine 5202, leucine 5298–valine 5731, and threonine 5927–glutamine 6119.

Post-translationally, proteolytically cleaved; only the full-length form localizes to the inner core, while processed version also localizes to the outer core during the onset of cell division.

The protein localises to the cytoplasm. It localises to the cytoskeleton. Its subcellular location is the microtubule organizing center. It is found in the centrosome. Functionally, part of the centrosome inner core complex. Required for the linking of centrosomal inner and outer cores. This chain is Centrosome-associated protein CEP250, found in Toxoplasma gondii (strain ATCC 50611 / Me49).